Consider the following 970-residue polypeptide: Phosphoenolpyruvate carboxylase 1 (970 aa).

Ser15 carries the phosphoserine modification. Active-site residues include His177, Lys606, and Arg647.

The protein belongs to the PEPCase type 1 family. Homotetramer. The cofactor is Mg(2+).

The protein localises to the cytoplasm. The enzyme catalyses oxaloacetate + phosphate = phosphoenolpyruvate + hydrogencarbonate. The protein operates within photosynthesis; C4 acid pathway. With respect to regulation, by light-reversible phosphorylation. Through the carboxylation of phosphoenolpyruvate (PEP) it forms oxaloacetate, a four-carbon dicarboxylic acid source for the tricarboxylic acid cycle. In Zea mays (Maize), this protein is Phosphoenolpyruvate carboxylase 1 (PEP1).